Reading from the N-terminus, the 891-residue chain is MSGKVANATPKAAAGKPRLSAAGGGAYRRTSSGPLPSAGGGGGRASSESGVSSRVRVAVRLRPRNADELAADADFGDCVELQPELKRLKLRKNNWESETYEFDEVLTEFASQKRVYEVVAKPVVESVLEGYNGTVMAYGQTGTGKTFTLGRLGEEDTAARGIMVRAMEDILADITPETDTVSVSYLQLYMEMIQDLLDPVNDNIAIVEDPRTGDVSLPGATVVEVRDQKSFVDLLRIGEAHRVAANTKLNTESSRSHALLMVNVRRAVKGKHEMDVSISGENGHSSSMVGSLRPPIVRKSKLVVVDLAGSERIDKSGSEGHTLEEAKSINLSLSALGKCINALAENSPHVPVRDSKLTRLLKDSFGGTARTSLVVTIGPSPRHRGETTSTIMFGQRAMKVENMVKLKEEFDYKSLCRRLDIELDKLIAENERQRKYFDDEIERITAEAQLRVTEAEREYKISLENEKAKYHQEYLDSIKILEEKWKIHQQSPKKLIKETEPTSSEVGEVQNLLQNEKVLRQSAEDEANDLKNQVLHWKKMEAAATAEVVKLRKMLDTEASQKEKLDEEIAVLKSQLLQLSLDADETRRSLDRGDGSGKIFPGFDSLMSHSRNSQPREQSNGPKPPIAKLFEQVGLQKILSLLESEEPDVRVHAVKVVANLAAEEANQEKIVEAGGLTSLLMLLRSSEDETIRRVAAGAIANLAMNETNQDLIMAQGGVSLLSMTASDAEDPQTLRMVAGAIANLCGNDKLQTRLRGEGGIKALLGMVKCGHPDVLAQVARGIANFAKCESRAATQGNKVGKSLLIDDGALPWIVKNANNEAAPIRRHIELALCHLAQHEVNSKDIISEGALWELVRISRDCSREDIRMLAYRTLTSSPTLQSEMRRLRIEC.

Residues 1-54 are disordered; the sequence is MSGKVANATPKAAAGKPRLSAAGGGAYRRTSSGPLPSAGGGGGRASSESGVSSR. Over residues 45-54 the composition is skewed to low complexity; it reads ASSESGVSSR. Residues 54-400 enclose the Kinesin motor domain; the sequence is RVRVAVRLRP…IMFGQRAMKV (347 aa). Residue 139-146 participates in ATP binding; that stretch reads GQTGTGKT. The short motif at 370–378 is the D-BOX element; that stretch reads RTSLVVTIG. A coiled-coil region spans residues 502-592; it reads TSSEVGEVQN…ADETRRSLDR (91 aa). The span at 586–595 shows a compositional bias: basic and acidic residues; the sequence is TRRSLDRGDG. A disordered region spans residues 586 to 626; it reads TRRSLDRGDGSGKIFPGFDSLMSHSRNSQPREQSNGPKPPI. The segment covering 607–621 has biased composition (polar residues); the sequence is MSHSRNSQPREQSNG. ARM repeat units lie at residues 623–662, 664–704, 706–746, and 748–787; these read KPPI…NLAA, EANQ…NLAM, ETNQ…NLCG, and DKLQ…NFAK.

The protein belongs to the TRAFAC class myosin-kinesin ATPase superfamily. Kinesin family. Ungrouped subfamily.

It localises to the cytoplasm. Its subcellular location is the cytoskeleton. The chain is Kinesin-like protein KIN-UB from Oryza sativa subsp. japonica (Rice).